The primary structure comprises 109 residues: Phosphoribosyl-ATP pyrophosphatase (109 aa).

It belongs to the PRA-PH family.

The protein resides in the cytoplasm. The enzyme catalyses 1-(5-phospho-beta-D-ribosyl)-ATP + H2O = 1-(5-phospho-beta-D-ribosyl)-5'-AMP + diphosphate + H(+). It functions in the pathway amino-acid biosynthesis; L-histidine biosynthesis; L-histidine from 5-phospho-alpha-D-ribose 1-diphosphate: step 2/9. This chain is Phosphoribosyl-ATP pyrophosphatase, found in Marinobacter nauticus (strain ATCC 700491 / DSM 11845 / VT8) (Marinobacter aquaeolei).